The following is a 1088-amino-acid chain: Sterol regulatory element-binding protein 2 (1088 aa).

Residues 1–38 (METLTELGDELTLGDIDEMLQFVSNQVGEFPDLFEEQL) form a transcriptional activation (acidic) region. The Cytoplasmic segment spans residues 1–440 (METLTELGDE…TGLGMMDRSR (440 aa)). Positions 59–70 (AAQQPYTTSAPQ) are enriched in polar residues. The disordered stretch occupies residues 59–87 (AAQQPYTTSAPQPQLLPVKAPPQATPQRT). In terms of domain architecture, bHLH spans 290-340 (ERRTTHNIIEKRYRSSINDKIMELKDLVMGTDAKMHKSGVLKKAIDYIKYL). Residues 340–361 (LQQVNQKLRQENMALKLANQKN) form a leucine-zipper region. Residues 392 to 431 (SPPASDSGSPAVFSPYSVDSEPGSPLLDDEKVKDEPDSPT) are disordered. The chain crosses the membrane as a helical span at residues 441–461 (MLLCTMTFLCLSFNPLTSLLH). The Lumenal portion of the chain corresponds to 462-494 (PESGQYSERAVQHGTGRTMLGVEMSGFYGSWFD). Residues 495–515 (WLIPTIILWLVNGVIVLSVFM) traverse the membrane as a helical segment. Topologically, residues 516–1088 (KLLIHGEPVT…LSGGTAMAAS (573 aa)) are cytoplasmic.

The protein belongs to the SREBP family. Forms a tight complex with scap, the SCAP-SREBP complex, in the endoplasmic reticulum membrane. As to quaternary structure, homodimer; efficient DNA binding of the soluble transcription factor fragment requires dimerization with another bHLH protein. Processed in the Golgi apparatus, releasing the protein from the membrane. At low cholesterol the SCAP-SREBP complex is recruited into COPII vesicles for export from the endoplasmic reticulum. In the Golgi, complex SREBPs are cleaved sequentially by site-1 (MBTPS1, S1P) and site-2 (MBTPS2, S2P) proteases. The first cleavage by site-1 protease occurs within the luminal loop, the second cleavage by site-2 protease occurs within the first transmembrane domain, releasing the transcription factor from the Golgi membrane.

It localises to the endoplasmic reticulum membrane. Its subcellular location is the golgi apparatus membrane. It is found in the cytoplasmic vesicle. The protein resides in the COPII-coated vesicle membrane. The protein localises to the nucleus. Precursor of the transcription factor form (Processed sterol regulatory element-binding protein 2), which is embedded in the endoplasmic reticulum membrane. Low sterol concentrations promote processing of this form, releasing the transcription factor form that translocates into the nucleus and activates transcription of genes involved in cholesterol biosynthesis. In terms of biological role, key transcription factor that regulates expression of genes involved in cholesterol biosynthesis. Binds to the sterol regulatory element 1 (SRE-1) (5'-ATCACCCCAC-3'). Has dual sequence specificity binding to both an E-box motif (5'-ATCACGTGA-3') and to SRE-1 (5'-ATCACCCCAC-3'). Regulates transcription of genes related to cholesterol synthesis pathway. In Xenopus laevis (African clawed frog), this protein is Sterol regulatory element-binding protein 2.